The primary structure comprises 442 residues: Myb family transcription factor PHL13 (442 aa).

The region spanning 235–295 (MTSKQRMRWT…HLQKYRTARY (61 aa)) is the HTH myb-type domain. The H-T-H motif DNA-binding region spans 266–291 (PKAVLKLINSPGLTVYHVKSHLQKYR). Residues 329–349 (TEALRLQMKVQKQLHEQLEIQ) are coiled coil. The short motif at 342 to 347 (LHEQLE) is the LHEQLE element. The segment covering 370 to 380 (QQKMQENKKDS) has biased composition (basic and acidic residues). The segment at 370–442 (QQKMQENKKD…TSNRKRVRED (73 aa)) is disordered. Residues 395 to 434 (SPNLSQPFLHKATNSEPSITQKLQNGSSTMDQSESTSGTS) show a composition bias toward polar residues.

The protein belongs to the MYB-CC family.

It is found in the nucleus. This chain is Myb family transcription factor PHL13, found in Arabidopsis thaliana (Mouse-ear cress).